Consider the following 581-residue polypeptide: MKENAASRVLFILLLFLFASLLNGQSPPEKPKLIKCRSPGKETFTCWWEPGADGGLPTNYTLTYRKEGETLIHECPDYKTGGPNSCYFSKKYTSIWKMYVITVSAINQMGISSSDPLYVDVTYIVEPEPPVNLTLELKHPEDRKPYLWIKWSPPTLTDVKSGWFSIQYEIRLKPEKATDWETHFAPKLTQLKIFNLYPGQKYLVQIRCKPDHGYWSEWSPESFIQIPNDFPVKDTSMWIFVGVLSAVICLIMVWAVALKGYSMVTCILPPVPGPKIKGFDIHLLEKGKSEELLRALESQDFLPTSDCEDLLMEFIEVDDSEDQHLMPHPSKEHMEQGVKPMHLDPDTDSGRGSCDSPSLLSEKCDEPQAYPSKFHIPEGPEKLEDPETNHTCLQAPQSTSGEGKIPYFLANGPKSSTWPFPQPPSLYSPRYSYHNIADVCELALGMAGTTATLLDQTDQHAFKPSKTIETGGEGKAAKQSESEGYSSEPDQDMAWPLLQDKTPLFSAKPLEYVEIHKVSQDGVLALFPKQNEKVDAPETSKEYSKVSRVTDSNILVLIPDLQAQNLTLLEESAKKAPPALP.

A signal peptide spans 1 to 24 (MKENAASRVLFILLLFLFASLLNG). Topologically, residues 25-237 (QSPPEKPKLI…NDFPVKDTSM (213 aa)) are extracellular. Fibronectin type-III domains are found at residues 27 to 127 (PPEK…IVEP) and 129 to 229 (PPVN…IPND). Cysteines 36 and 46 form a disulfide. N59 is a glycosylation site (N-linked (GlcNAc...) asparagine). A disulfide bond links C75 and C86. N132 carries an N-linked (GlcNAc...) asparagine glycan. 2 residues coordinate Zn(2+): D211 and H212. The WSXWS motif signature appears at 215–219 (WSEWS). The chain crosses the membrane as a helical span at residues 238-258 (WIFVGVLSAVICLIMVWAVAL). Topologically, residues 259 to 581 (KGYSMVTCIL…SAKKAPPALP (323 aa)) are cytoplasmic. Positions 267–275 (ILPPVPGPK) match the Box 1 motif motif. 2 stretches are compositionally biased toward basic and acidic residues: residues 323-349 (QHLM…DTDS) and 375-388 (HIPE…DPET). Disordered stretches follow at residues 323-388 (QHLM…DPET) and 462-492 (FKPS…PDQD).

Belongs to the type I cytokine receptor family. Type 1 subfamily. Interacts with SMARCA1. Interacts with NEK3 and VAV2 and this interaction is prolactin-dependent. As to expression, expressed in all tissues examined; liver, pituitary, adrenal gland, ovary and fetal liver.

The protein resides in the membrane. Its function is as follows. This is a receptor for the anterior pituitary hormone prolactin. The chain is Prolactin receptor (PRLR) from Ovis aries (Sheep).